The sequence spans 34 residues: Photosystem II reaction center protein M (34 aa).

The helical transmembrane segment at 7 to 27 (GFVASLLFILVPAIFLIVLYI) threads the bilayer.

Belongs to the PsbM family. PSII is composed of 1 copy each of membrane proteins PsbA, PsbB, PsbC, PsbD, PsbE, PsbF, PsbH, PsbI, PsbJ, PsbK, PsbL, PsbM, PsbT, PsbX, PsbY, PsbZ, Psb30/Ycf12, peripheral proteins PsbO, CyanoQ (PsbQ), PsbU, PsbV and a large number of cofactors. It forms dimeric complexes.

It is found in the cellular thylakoid membrane. In terms of biological role, one of the components of the core complex of photosystem II (PSII). PSII is a light-driven water:plastoquinone oxidoreductase that uses light energy to abstract electrons from H(2)O, generating O(2) and a proton gradient subsequently used for ATP formation. It consists of a core antenna complex that captures photons, and an electron transfer chain that converts photonic excitation into a charge separation. This subunit is found at the monomer-monomer interface. The polypeptide is Photosystem II reaction center protein M (Parasynechococcus marenigrum (strain WH8102)).